A 1140-amino-acid polypeptide reads, in one-letter code: Kinesin-like protein KIN-14O (1140 aa).

Positions 1–12 (MLESEFQREHAF) are enriched in basic and acidic residues. Disordered regions lie at residues 1–37 (MLES…ADDD), 50–81 (NPAE…DEDS), 161–217 (SPGS…GGHK), and 323–347 (ASGT…KEED). Low complexity predominate over residues 161 to 179 (SPGSSHGGSTPRSPFSPSS). Basic and acidic residues predominate over residues 180–193 (PRERHNKGLADSRF). Over residues 197–209 (LPNSSALDPSSPG) the composition is skewed to polar residues. Residues 327 to 546 (SEENETEKSK…KAKEMEEKSE (220 aa)) are a coiled coil. Positions 332 to 347 (TEKSKLEEKKKDKEED) are enriched in basic and acidic residues. In terms of domain architecture, Kinesin motor spans 632–952 (NIRVYCRVRP…LKFAERVSGV (321 aa)). An ATP-binding site is contributed by 716 to 723 (GQTGSGKT). Over residues 1002–1018 (LGQSDDFNSEAGDSQLS) the composition is skewed to polar residues. Disordered regions lie at residues 1002 to 1021 (LGQS…SIED) and 1028 to 1140 (DYTR…KRWS). Over residues 1066–1078 (EGRKPLKISDKPK) the composition is skewed to basic and acidic residues. Residues 1099 to 1130 (TMRTTNIAKATSALLSPSSQGMKKTGSASNFL) are compositionally biased toward polar residues.

This sequence belongs to the TRAFAC class myosin-kinesin ATPase superfamily. Kinesin family. KIN-14 subfamily.

This chain is Kinesin-like protein KIN-14O, found in Arabidopsis thaliana (Mouse-ear cress).